The following is a 459-amino-acid chain: Elongation factor 1-alpha 4 (459 aa).

Residues 5-242 (KTHINIVVIG…DCIIPPQRPT (238 aa)) enclose the tr-type G domain. The G1 stretch occupies residues 14–21 (GHVDSGKS). The interval 70 to 74 (GITID) is G2. The tract at residues 91-94 (DAPG) is G3. Positions 153 to 156 (NKMD) are G4. A G5 region spans residues 194–196 (SGF). 5-glutamyl glycerylphosphorylethanolamine is present on residues glutamate 301 and glutamate 374.

The protein belongs to the TRAFAC class translation factor GTPase superfamily. Classic translation factor GTPase family. EF-Tu/EF-1A subfamily.

It localises to the cytoplasm. Functionally, this protein promotes the GTP-dependent binding of aminoacyl-tRNA to the A-site of ribosomes during protein biosynthesis. The polypeptide is Elongation factor 1-alpha 4 (eft-4) (Oscheius tipulae).